The chain runs to 767 residues: Protein hunchback (767 aa).

Disordered stretches follow at residues 30-51 (EPGHHLDGNSVASSPRQSPIPS), 105-127 (QQQYQQHFQAAQQQHHHHHHLMG), and 174-212 (EKLQALTPPMDVTPPKSPAKSSQSNIEPEKEHDQMSNSS). Over residues 39 to 51 (SVASSPRQSPIPS) the composition is skewed to polar residues. Residues 105–117 (QQQYQQHFQAAQQ) show a composition bias toward low complexity. Over residues 200-212 (EPEKEHDQMSNSS) the composition is skewed to basic and acidic residues. 4 consecutive C2H2-type zinc fingers follow at residues 242-264 (YKCKTCGVVAITKVDFWAHTRTH), 271-293 (LQCPKCPFVTEFKHHLEYHIRKH), 299-321 (FQCDKCSYTCVNKSMLNSHRKSH), and 327-351 (YRCADCDYATKYCHSFKLHLRKYGH). 3 disordered regions span residues 357-424 (LDED…TSQL), 518-570 (QLQQ…QPQQ), and 610-704 (GVMT…APPS). Positions 386 to 397 (IASGGSGSGSGS) are enriched in gly residues. Residues 518–527 (QLQQQNQQQS) are compositionally biased toward low complexity. Positions 528–537 (DNEEEEQDDE) are enriched in acidic residues. Residues 661–704 (ANTSASSTASSSGNSSNASSNSNGNSSSNSSSSGTNSAAAAPPS) are compositionally biased toward low complexity. C2H2-type zinc fingers lie at residues 714-736 (YECKYCDIFFKDAVLYTIHMGYH) and 742-766 (FKCNMCGEKCDGPVGLFVHMARNAH).

This sequence belongs to the hunchback C2H2-type zinc-finger protein family.

Its subcellular location is the nucleus. Gap class segmentation protein that controls development of head structures. In Drosophila orena (Fruit fly), this protein is Protein hunchback (hb).